We begin with the raw amino-acid sequence, 226 residues long: Protein DEHYDRATION-INDUCED 19 (226 aa).

The interval 158–208 (FPTSDTEETSKPPISIPDDASVIKETPAQPWDSSIDSSLTREEREQKRKQA) is disordered. Basic and acidic residues predominate over residues 196-205 (LTREEREQKR).

The protein belongs to the Di19 family.

The chain is Protein DEHYDRATION-INDUCED 19 (DI19-1) from Oryza sativa subsp. japonica (Rice).